We begin with the raw amino-acid sequence, 373 residues long: Sterol 24-C-methyltransferase (373 aa).

Belongs to the class I-like SAM-binding methyltransferase superfamily. Erg6/SMT family.

The catalysed reaction is zymosterol + S-adenosyl-L-methionine = fecosterol + S-adenosyl-L-homocysteine + H(+). It participates in steroid metabolism; ergosterol biosynthesis; ergosterol from zymosterol: step 1/5. Its function is as follows. Catalyzes the methyl transfer from S-adenosyl-methionine to the C-24 of zymosterol to form fecosterol. The chain is Sterol 24-C-methyltransferase (ERG6) from Eremothecium gossypii (strain ATCC 10895 / CBS 109.51 / FGSC 9923 / NRRL Y-1056) (Yeast).